A 617-amino-acid polypeptide reads, in one-letter code: Thioredoxin reductase (617 aa).

FAD is bound by residues 127–128, 147–150, 163–164, 168–172, alanine 237, aspartate 433, and 440–442; these read PG, DYVK, TC, GCVPK, and ELA. A disulfide bond links cysteine 164 and cysteine 169. A loop important for the interaction with TRX1 region spans residues 514 to 528; it reads HRQKHIRAQKDEYDL. Histidine 585 provides a ligand contact to FAD. The Proton acceptor role is filled by histidine 585. Cysteine 611 and cysteine 616 form a disulfide bridge.

This sequence belongs to the class-I pyridine nucleotide-disulfide oxidoreductase family. In terms of assembly, homodimer. FAD serves as cofactor.

The protein resides in the mitochondrion. It is found in the cytoplasm. It carries out the reaction [thioredoxin]-dithiol + NADP(+) = [thioredoxin]-disulfide + NADPH + H(+). Functionally, catalyzes the transfer of electrons from NADPH to thioredoxins TRX1, TRX2 and TRX3, which in turn act as reductants of disulfide containing proteins. Able to reduce nitroglutathione (GSNO), a compound involved in the transport of nitric oxide (NO); however, TRX1 is more efficient in reducing GSNO. Has no catalytic activity towards oxidized glutathione (GSSG). This is Thioredoxin reductase from Plasmodium falciparum (isolate 3D7).